Reading from the N-terminus, the 107-residue chain is L-rhamnose mutarotase (107 aa).

Tyr21 contributes to the substrate binding site. Residue His25 is the Proton donor of the active site. Substrate contacts are provided by residues Tyr44 and Trp79–Trp80.

Belongs to the rhamnose mutarotase family. As to quaternary structure, homodimer.

It is found in the cytoplasm. It catalyses the reaction alpha-L-rhamnose = beta-L-rhamnose. The protein operates within carbohydrate metabolism; L-rhamnose metabolism. Its function is as follows. Involved in the anomeric conversion of L-rhamnose. The chain is L-rhamnose mutarotase from Agrobacterium fabrum (strain C58 / ATCC 33970) (Agrobacterium tumefaciens (strain C58)).